Consider the following 1832-residue polypeptide: Multifunctional protein pyr-3 (1832 aa).

The segment at 2–400 (AATVYRPATA…PGPRDTEFLF (399 aa)) is GATase (Glutamine amidotransferase). The L-glutamine site is built by Ser-64, Gly-273, and Gly-275. The region spanning 228–413 (RILCLDVGMK…IQTVAKCTTD (186 aa)) is the Glutamine amidotransferase type-1 domain. Residue Cys-302 is the Nucleophile; for GATase activity of the active site. Residues Leu-303, Gln-306, Asn-344, Gly-346, and Tyr-347 each contribute to the L-glutamine site. Residues His-386 and Glu-388 each act as for GATase activity in the active site. A linker region spans residues 401-442 (DVFIQTVAKCTTDNTLLQKGVEFPGGTTEENERLHPRVDVKK). The interval 443 to 983 (VLVLGSGGLS…SEHDVSFEDR (541 aa)) is CPSase A. Residues 443–1484 (VLVLGSGGLS…TNVKNAKILV (1042 aa)) are CPSase (Carbamoyl phosphate synthase). Positions 560, 600, 606, 607, 637, 639, 644, 670, 671, 672, 713, and 727 each coordinate ATP. 2 consecutive ATP-grasp domains span residues 564 to 756 (ARSM…KLGL) and 1102 to 1293 (SRML…KAIM). Positions 713, 727, and 729 each coordinate Mg(2+). Residues Gln-713, Glu-727, and Asn-729 each coordinate Mn(2+). A CPSase B region spans residues 984–1484 (GVMVLGSGVY…TNVKNAKILV (501 aa)). ATP-binding residues include Arg-1138, Lys-1177, Ile-1179, Glu-1184, Gly-1209, Val-1210, His-1211, Ser-1212, Gln-1252, and Glu-1264. Mg(2+) is bound by residues Gln-1252, Glu-1264, and Asn-1266. Residues Gln-1252, Glu-1264, and Asn-1266 each contribute to the Mn(2+) site. Residues 1359 to 1507 (FKVPKKNILL…RDYQTSHTPL (149 aa)) form the MGS-like domain. The interval 1485-1528 (EAIARYRDMEIGERDYQTSHTPLQLSGQVNFTLQDSLSRPHSFK) is linker. An ATCase (Aspartate transcarbamylase) region spans residues 1529-1832 (KAHVLSVEQY…MALLALVMSG (304 aa)). Carbamoyl phosphate-binding residues include Arg-1581 and Thr-1582. Lys-1609 is a binding site for L-aspartate. Carbamoyl phosphate is bound by residues Arg-1630, His-1658, and Gln-1661. The L-aspartate site is built by Arg-1691 and Arg-1754. 2 residues coordinate carbamoyl phosphate: Leu-1793 and Pro-1794.

The protein in the N-terminal section; belongs to the CarA family. In the central section; belongs to the CarB family. It in the C-terminal section; belongs to the aspartate/ornithine carbamoyltransferase superfamily. ATCase family. The cofactor is Mg(2+). It depends on Mn(2+) as a cofactor.

The protein localises to the cytoplasm. The protein resides in the nucleus. The catalysed reaction is hydrogencarbonate + L-glutamine + 2 ATP + H2O = carbamoyl phosphate + L-glutamate + 2 ADP + phosphate + 2 H(+). It catalyses the reaction L-glutamine + H2O = L-glutamate + NH4(+). It carries out the reaction hydrogencarbonate + NH4(+) + 2 ATP = carbamoyl phosphate + 2 ADP + phosphate + 2 H(+). The enzyme catalyses carbamoyl phosphate + L-aspartate = N-carbamoyl-L-aspartate + phosphate + H(+). Its pathway is pyrimidine metabolism; UMP biosynthesis via de novo pathway; (S)-dihydroorotate from bicarbonate: step 1/3. The protein operates within pyrimidine metabolism; UMP biosynthesis via de novo pathway; (S)-dihydroorotate from bicarbonate: step 2/3. Both CPSase and ATCase activities are feedback inhibited by the end product UTP. Its function is as follows. Multifunctional protein that encodes the first 2 enzymatic activities of the de novo pyrimidine pathway: carbamoylphosphate synthetase (CPSase; EC 6.3.5.5) and aspartate transcarbamylase (ATCase; EC 2.1.3.2). The CPSase-function is accomplished in 2 steps, by a glutamine-dependent amidotransferase activity (GATase) that binds and cleaves glutamine to produce ammonia, followed by an ammonium-dependent carbamoyl phosphate synthetase, which reacts with the ammonia, hydrogencarbonate and ATP to form carbamoyl phosphate. The endogenously produced carbamoyl phosphate is sequestered and channeled to the ATCase active site. ATCase then catalyzes the formation of carbamoyl-L-aspartate from L-aspartate and carbamoyl phosphate. The sequence is that of Multifunctional protein pyr-3 (pyr-3) from Neurospora crassa (strain ATCC 24698 / 74-OR23-1A / CBS 708.71 / DSM 1257 / FGSC 987).